Reading from the N-terminus, the 323-residue chain is Phospho-N-acetylmuramoyl-pentapeptide-transferase (323 aa).

Helical transmembrane passes span 3–23 (NILL…PALI), 52–72 (MGGL…SWVL), 77–97 (MLPT…LGMW), 121–141 (IVGA…MALH), 145–165 (IGNW…LVGF), 175–195 (LDGL…IVAW), 200–220 (INIA…LIFN), 226–248 (IFMG…ILLH), and 301–321 (IDLT…WVIL).

This sequence belongs to the glycosyltransferase 4 family. MraY subfamily. Requires Mg(2+) as cofactor.

It localises to the cell membrane. It catalyses the reaction UDP-N-acetyl-alpha-D-muramoyl-L-alanyl-gamma-D-glutamyl-L-lysyl-D-alanyl-D-alanine + di-trans,octa-cis-undecaprenyl phosphate = Mur2Ac(oyl-L-Ala-gamma-D-Glu-L-Lys-D-Ala-D-Ala)-di-trans,octa-cis-undecaprenyl diphosphate + UMP. Its pathway is cell wall biogenesis; peptidoglycan biosynthesis. In terms of biological role, catalyzes the initial step of the lipid cycle reactions in the biosynthesis of the cell wall peptidoglycan: transfers peptidoglycan precursor phospho-MurNAc-pentapeptide from UDP-MurNAc-pentapeptide onto the lipid carrier undecaprenyl phosphate, yielding undecaprenyl-pyrophosphoryl-MurNAc-pentapeptide, known as lipid I. The protein is Phospho-N-acetylmuramoyl-pentapeptide-transferase of Levilactobacillus brevis (strain ATCC 367 / BCRC 12310 / CIP 105137 / JCM 1170 / LMG 11437 / NCIMB 947 / NCTC 947) (Lactobacillus brevis).